A 460-amino-acid polypeptide reads, in one-letter code: MTRQHFGTDGIRGTVGQPPITPDFVLRLAHAVGRVLRQTQERPVVLIGKDTRISGYMLESALESGFNSAGVDVVLLGPLPTPGVAYLTCAQRASLGVVISASHNPYPDNGIKFFSAQGSKLSDAWEQAVETALGEPPAWTNSANLGKARRLNDAAERYIEFCKNTFAQDLSLKGLKIVLDAAHGAAYQVGPKVLRELEAEVIAIGCSPDGLNINHEVGATHPDTLVRAVHAHHADYGIALDGDADRVLIVDATGRLYNGDELLYLMVADRMGRDEHVPGVVGTLMTNRAVELALQARGVEFVRAKVGDRYILEELTRRDWALGGEGSGHLLALDRHTTGDGIGSALQVLQACVRSRSTLAQLLAAVTLYPQVLLNVRLPPDQDWTTNRLLADAIQAVEQQLGASGRVLIRASGTEPLLRVMVEARDAQLADSCAQRLANAARAGWQGHTSLKNAPPMGAN.

The Phosphoserine intermediate role is filled by Ser102. Mg(2+) contacts are provided by Ser102, Asp241, Asp243, and Asp245. Phosphoserine is present on Ser102.

Belongs to the phosphohexose mutase family. Requires Mg(2+) as cofactor. Activated by phosphorylation.

It catalyses the reaction alpha-D-glucosamine 1-phosphate = D-glucosamine 6-phosphate. Its function is as follows. Catalyzes the conversion of glucosamine-6-phosphate to glucosamine-1-phosphate. In Verminephrobacter eiseniae (strain EF01-2), this protein is Phosphoglucosamine mutase.